The chain runs to 113 residues: uncharacterized protein (113 aa).

Positions 94–113 (SKTGLDEQAHVQKAHDVQDV) are disordered. Over residues 96 to 113 (TGLDEQAHVQKAHDVQDV) the composition is skewed to basic and acidic residues.

The protein belongs to the geminiviridae protein AV2/V2 family. In terms of assembly, interacts with host SGS3.

It localises to the host cytoplasm. The protein localises to the host perinuclear region. Functionally, through its interaction with host SGS3, acts as a suppressor of RNA-mediated gene silencing, also known as post-transcriptional gene silencing (PTGS), a mechanism of plant viral defense that limits the accumulation of viral RNAs. This is an uncharacterized protein from African cassava mosaic virus (isolate Nigerian) (ACMV).